The following is a 411-amino-acid chain: Tyrosine--tRNA ligase (411 aa).

Residue tyrosine 34 coordinates L-tyrosine. The 'HIGH' region motif lies at 39–48 (CTATSLHIGS). Residues tyrosine 171 and glutamine 175 each coordinate L-tyrosine. Residues 231–235 (KMGKT) carry the 'KMSKS' region motif. Lysine 234 is a binding site for ATP. The 67-residue stretch at 345–411 (ISAYELFHEA…GKKRHILVRV (67 aa)) folds into the S4 RNA-binding domain.

It belongs to the class-I aminoacyl-tRNA synthetase family. TyrS type 1 subfamily. Homodimer.

The protein resides in the cytoplasm. The enzyme catalyses tRNA(Tyr) + L-tyrosine + ATP = L-tyrosyl-tRNA(Tyr) + AMP + diphosphate + H(+). Functionally, catalyzes the attachment of tyrosine to tRNA(Tyr) in a two-step reaction: tyrosine is first activated by ATP to form Tyr-AMP and then transferred to the acceptor end of tRNA(Tyr). The sequence is that of Tyrosine--tRNA ligase from Rickettsia massiliae (strain Mtu5).